The primary structure comprises 203 residues: N-(5'-phosphoribosyl)anthranilate isomerase (203 aa).

This sequence belongs to the TrpF family.

The enzyme catalyses N-(5-phospho-beta-D-ribosyl)anthranilate = 1-(2-carboxyphenylamino)-1-deoxy-D-ribulose 5-phosphate. The protein operates within amino-acid biosynthesis; L-tryptophan biosynthesis; L-tryptophan from chorismate: step 3/5. In Geobacter sulfurreducens (strain ATCC 51573 / DSM 12127 / PCA), this protein is N-(5'-phosphoribosyl)anthranilate isomerase.